A 206-amino-acid chain; its full sequence is Putative apoptosis inhibitor 021L (206 aa).

Residues 95-105 (TSKSPVSNQPS) show a composition bias toward polar residues. Residues 95-114 (TSKSPVSNQPSPEEDEPIPD) form a disordered region. The RING-type zinc finger occupies 157–195 (CVVCQANVRNVVFVPCNHLATCISCSANPLMPKKCPMCR).

This sequence belongs to the IIV-6 193R family.

Plays a role early in infection by preventing host cell apoptosis. The chain is Putative apoptosis inhibitor 021L from Aedes vexans (Inland floodwater mosquito).